We begin with the raw amino-acid sequence, 588 residues long: 2-isopropylmalate synthase (588 aa).

A Pyruvate carboxyltransferase domain is found at proline 40–aspartate 314. 4 residues coordinate Mg(2+): aspartate 49, histidine 253, histidine 255, and asparagine 289. Residues alanine 456 to valine 588 are regulatory domain.

The protein belongs to the alpha-IPM synthase/homocitrate synthase family. LeuA type 2 subfamily. In terms of assembly, homodimer. Mg(2+) serves as cofactor.

The protein resides in the cytoplasm. It catalyses the reaction 3-methyl-2-oxobutanoate + acetyl-CoA + H2O = (2S)-2-isopropylmalate + CoA + H(+). It participates in amino-acid biosynthesis; L-leucine biosynthesis; L-leucine from 3-methyl-2-oxobutanoate: step 1/4. Its function is as follows. Catalyzes the condensation of the acetyl group of acetyl-CoA with 3-methyl-2-oxobutanoate (2-ketoisovalerate) to form 3-carboxy-3-hydroxy-4-methylpentanoate (2-isopropylmalate). The protein is 2-isopropylmalate synthase of Clavibacter sepedonicus (Clavibacter michiganensis subsp. sepedonicus).